The primary structure comprises 415 residues: Probable cytosolic iron-sulfur protein assembly protein 1 (415 aa).

The stretch at 9–48 (AHDDKVWSLSSHPTLPLLATASTDKCSNIYRLSCSNASSS) is one WD 1 repeat. The tract at residues 45-70 (ASSSSSSSSPPSPPSPPSSSSPRRNF) is disordered. The span at 54 to 63 (PPSPPSPPSS) shows a compositional bias: pro residues. WD repeat units lie at residues 79-131 (THRR…DDNT), 160-200 (GHEN…EEFE), 207-246 (DHTQDVKHVTWHPTRNLLASSSYDDTIRVYKQEFDDDEWS), 253-300 (GHEG…GFNG), 335-374 (IHTHAIYSVAWSSSSGKIATAGSDGRIVVYKETNAGWEVE), and 380-415 (AHGVYEINCVIWAKLDLDQEVLISGGDDGNVNIWEV).

It belongs to the WD repeat CIA1 family. In terms of assembly, interacts with NAR1.

Its subcellular location is the cytoplasm. It localises to the nucleus. Essential component of the cytosolic iron-sulfur (Fe/S) protein assembly machinery. Required for the maturation of extramitochondrial Fe/S proteins. This is Probable cytosolic iron-sulfur protein assembly protein 1 from Lodderomyces elongisporus (strain ATCC 11503 / CBS 2605 / JCM 1781 / NBRC 1676 / NRRL YB-4239) (Yeast).